The following is a 313-amino-acid chain: Ribosomal RNA small subunit methyltransferase H (313 aa).

S-adenosyl-L-methionine-binding positions include 35–37 (GGH), Asp55, Phe79, Asp101, and Gln108. The disordered stretch occupies residues 276–300 (QGGPTLKSVGKMMPPDDEVADNPRA).

The protein belongs to the methyltransferase superfamily. RsmH family.

It localises to the cytoplasm. It catalyses the reaction cytidine(1402) in 16S rRNA + S-adenosyl-L-methionine = N(4)-methylcytidine(1402) in 16S rRNA + S-adenosyl-L-homocysteine + H(+). Functionally, specifically methylates the N4 position of cytidine in position 1402 (C1402) of 16S rRNA. This is Ribosomal RNA small subunit methyltransferase H from Dickeya chrysanthemi (strain Ech1591) (Dickeya zeae (strain Ech1591)).